The following is a 416-amino-acid chain: Serine/threonine transporter SstT (416 aa).

9 helical membrane-spanning segments follow: residues 15-35 (SLVS…MFMP), 49-69 (VGAL…AAII), 82-102 (ILLL…VASF), 141-161 (ALLD…GIAM), 192-212 (LGIL…ALFG), 217-237 (LVVL…LIVF), 288-308 (VSIP…ITVL), 316-336 (LGME…TISA), and 363-383 (IAMQ…SAET).

The protein belongs to the dicarboxylate/amino acid:cation symporter (DAACS) (TC 2.A.23) family.

It is found in the cell inner membrane. The enzyme catalyses L-serine(in) + Na(+)(in) = L-serine(out) + Na(+)(out). It carries out the reaction L-threonine(in) + Na(+)(in) = L-threonine(out) + Na(+)(out). Involved in the import of serine and threonine into the cell, with the concomitant import of sodium (symport system). This chain is Serine/threonine transporter SstT, found in Aeromonas hydrophila subsp. hydrophila (strain ATCC 7966 / DSM 30187 / BCRC 13018 / CCUG 14551 / JCM 1027 / KCTC 2358 / NCIMB 9240 / NCTC 8049).